The sequence spans 273 residues: Large ribosomal subunit protein uL2cz/uL2cy (273 aa).

Disordered regions lie at residues 1–25 (MAIHLYKTSTSSTRNGAVDSQVKSN) and 224–273 (NPVD…RRRK).

It belongs to the universal ribosomal protein uL2 family. Part of the 50S ribosomal subunit.

The protein localises to the plastid. Its subcellular location is the chloroplast. This chain is Large ribosomal subunit protein uL2cz/uL2cy (rpl2-A), found in Phalaenopsis aphrodite subsp. formosana (Moth orchid).